The following is a 520-amino-acid chain: MLAKGLSLRSVLAKGCQPFLSPTWQSSVLATGGGANISTNSPRPFNEIPSPGDNGWLNLYHFWRENGTHRIHYHHMQNFQKYGPIYREKLGNKDSVYILDPEDAAQLFLSEGPYPERYLVPPWVAYHQYYKRPIGVLFKSSEAWKKDRLVLNQEVMAPEAIKNFVPLLEGVVQDFINVLHRRIKQQKSGNFSGDISDDLFRFAFESITSVVFGERLGMLEEIVDPESQRFIDAIYQMFHTSVPMLNLPPELFRFFRTKTWKEHAAAWDMIFKKADDYTQTFYWDLRQKQEFSKYPGVLYSLLGGNKLPFKNIQANITEMLAGGVDTTSMTLQWSLYEMAHNLKVQEMLRAEVLAARRQAQGDMVKMVQLVPLLKASIKETLRLHPISVTVQRYLVDDLVLRNYRIPAKMLVQVANYAMGREPSFFPNPNKFDPTRWLEKSKNTTHFRYLSFGWGVRQCLGRRIAELEMTIFLINVLENFRIELQSLHDVGTKFNLILMPEKPILFNLQPLKKDLGTTTNR.

The N-terminal 36 residues, 1–36, are a transit peptide targeting the mitochondrion; the sequence is MLAKGLSLRSVLAKGCQPFLSPTWQSSVLATGGGAN. C458 contacts heme.

Belongs to the cytochrome P450 family. As to quaternary structure, interacts with FDX1/adrenodoxin. Requires heme as cofactor.

It localises to the mitochondrion inner membrane. The catalysed reaction is 6 reduced [adrenodoxin] + cholesterol + 3 O2 + 6 H(+) = 4-methylpentanal + pregnenolone + 6 oxidized [adrenodoxin] + 4 H2O. The enzyme catalyses 2 reduced [adrenodoxin] + cholesterol + O2 + 2 H(+) = (22R)-hydroxycholesterol + 2 oxidized [adrenodoxin] + H2O. It carries out the reaction (22R)-hydroxycholesterol + 2 reduced [adrenodoxin] + O2 + 2 H(+) = (20R,22R)-20,22-dihydroxycholesterol + 2 oxidized [adrenodoxin] + H2O. It catalyses the reaction (20R,22R)-20,22-dihydroxycholesterol + 2 reduced [adrenodoxin] + O2 + 2 H(+) = 4-methylpentanal + pregnenolone + 2 oxidized [adrenodoxin] + 2 H2O. The protein operates within lipid metabolism; C21-steroid hormone metabolism. Its pathway is steroid metabolism; cholesterol metabolism. Functionally, a cytochrome P450 monooxygenase that catalyzes the side-chain hydroxylation and cleavage of cholesterol to pregnenolone, the precursor of most steroid hormones. Catalyzes three sequential oxidation reactions of cholesterol, namely the hydroxylation at C22 followed with the hydroxylation at C20 to yield 20R,22R-hydroxycholesterol that is further cleaved between C20 and C22 to yield the C21-steroid pregnenolone and 4-methylpentanal. Mechanistically, uses molecular oxygen inserting one oxygen atom into a substrate and reducing the second into a water molecule. Two electrons are provided by NADPH via a two-protein mitochondrial transfer system comprising flavoprotein FDXR (adrenodoxin/ferredoxin reductase) and nonheme iron-sulfur protein FDX1 or FDX2 (adrenodoxin/ferredoxin). The sequence is that of Cholesterol side-chain cleavage enzyme, mitochondrial (CYP11A1) from Mesocricetus auratus (Golden hamster).